A 473-amino-acid polypeptide reads, in one-letter code: 3-isopropylmalate dehydratase large subunit (473 aa).

The [4Fe-4S] cluster site is built by Cys-354, Cys-414, and Cys-417. Residues 425–448 form a disordered region; sequence LAPGQRSASTSNRNFEGRQGRGGR.

This sequence belongs to the aconitase/IPM isomerase family. LeuC type 1 subfamily. In terms of assembly, heterodimer of LeuC and LeuD. [4Fe-4S] cluster is required as a cofactor.

It catalyses the reaction (2R,3S)-3-isopropylmalate = (2S)-2-isopropylmalate. The protein operates within amino-acid biosynthesis; L-leucine biosynthesis; L-leucine from 3-methyl-2-oxobutanoate: step 2/4. Functionally, catalyzes the isomerization between 2-isopropylmalate and 3-isopropylmalate, via the formation of 2-isopropylmaleate. This is 3-isopropylmalate dehydratase large subunit from Acidothermus cellulolyticus (strain ATCC 43068 / DSM 8971 / 11B).